The primary structure comprises 716 residues: Putative proline--tRNA ligase C19C7.06 (716 aa).

Residues 655 to 675 (KNSARQVNGDEPEDEKAPSMG) are disordered.

The protein belongs to the class-II aminoacyl-tRNA synthetase family.

The protein resides in the cytoplasm. The enzyme catalyses tRNA(Pro) + L-proline + ATP = L-prolyl-tRNA(Pro) + AMP + diphosphate. This is Putative proline--tRNA ligase C19C7.06 (prs1) from Schizosaccharomyces pombe (strain 972 / ATCC 24843) (Fission yeast).